The chain runs to 310 residues: MINPIYLIIADLLDRYIGEPPEKLHPVVFIGNFVKFLEKVFPSTHSVEKLKDLVFGFITVFLTVFTVFLIFFTLELILNLISNYYIKLFSYSLILSFSIGHKSLLEFSKAPIKYIMSGDIKSARKSVQHIVSRDTSTLDEKHVISAAVESSSENITDSIIAPLIYAAIFGLSGAFIYRAVNTMDAMLGYKNEKYRYYGKTAAYLDDILNFIPSRIAGILLIISAPFYGGKIVPAIYGYLKEGFKTPSPNSGYTMAVIANSLSMELEKIGCYKLGKGEITVLKAVNSLKAVDYSVLLFLVIYMVLYFNLIY.

5 helical membrane passes run 53-73 (LVFGFITVFLTVFTVFLIFFT), 80-100 (LISNYYIKLFSYSLILSFSIG), 157-177 (DSIIAPLIYAAIFGLSGAFIY), 215-235 (IAGILLIISAPFYGGKIVPAI), and 289-309 (AVDYSVLLFLVIYMVLYFNLI).

This sequence belongs to the CobD/CbiB family.

The protein localises to the cell membrane. Its pathway is cofactor biosynthesis; adenosylcobalamin biosynthesis. Converts cobyric acid to cobinamide by the addition of aminopropanol on the F carboxylic group. The protein is Probable cobalamin biosynthesis protein CobD of Methanococcus vannielii (strain ATCC 35089 / DSM 1224 / JCM 13029 / OCM 148 / SB).